The primary structure comprises 81 residues: Putative defensin-like protein 52 (81 aa).

Positions 1–20 are cleaved as a signal peptide; the sequence is MTFFLVIILAISSSNYNVLA. 2 disulfides stabilise this stretch: Cys31–Cys55 and Cys41–Cys64.

It belongs to the DEFL family.

Its subcellular location is the secreted. This is Putative defensin-like protein 52 from Arabidopsis thaliana (Mouse-ear cress).